Here is a 366-residue protein sequence, read N- to C-terminus: uncharacterized protein (366 aa).

The Proton donor role is filled by Glu-139. Glu-249 serves as the catalytic Nucleophile.

It belongs to the glycosyl hydrolase 53 family.

This is an uncharacterized protein from Niallia circulans (Bacillus circulans).